We begin with the raw amino-acid sequence, 300 residues long: NAD kinase (300 aa).

Catalysis depends on D75, which acts as the Proton acceptor. NAD(+) contacts are provided by residues 75 to 76 (DG), 149 to 150 (ND), R177, D179, 190 to 195 (TAYALS), A214, and Q248.

The protein belongs to the NAD kinase family. It depends on a divalent metal cation as a cofactor.

It is found in the cytoplasm. The catalysed reaction is NAD(+) + ATP = ADP + NADP(+) + H(+). Involved in the regulation of the intracellular balance of NAD and NADP, and is a key enzyme in the biosynthesis of NADP. Catalyzes specifically the phosphorylation on 2'-hydroxyl of the adenosine moiety of NAD to yield NADP. The polypeptide is NAD kinase (Burkholderia ambifaria (strain MC40-6)).